The chain runs to 449 residues: C4-dicarboxylate transport protein 1 (449 aa).

Transmembrane regions (helical) follow at residues 16-38 (FLQV…DLAV), 53-71 (MLIA…SGAG), 84-106 (VIYF…YSLG), 157-176 (ILQV…LVGE), 197-219 (GMIV…ARYG), 229-251 (LVLV…VLRL), 311-333 (GFSI…PLAM), and 358-380 (LVIL…VLVL).

This sequence belongs to the dicarboxylate/amino acid:cation symporter (DAACS) (TC 2.A.23) family.

Its subcellular location is the cell inner membrane. Responsible for the transport of dicarboxylates such as succinate, fumarate, and malate from the periplasm across the membrane. This chain is C4-dicarboxylate transport protein 1 (dctA1), found in Pseudomonas aeruginosa (strain ATCC 15692 / DSM 22644 / CIP 104116 / JCM 14847 / LMG 12228 / 1C / PRS 101 / PAO1).